The chain runs to 419 residues: Dynein regulatory complex protein 9 (419 aa).

Disordered stretches follow at residues 25–45 and 394–419; these read TGEPPEAAEEDLDYEEEEETS and NFKMPKKDKDDSKDSKGKEKEKRRKK. Over residues 30–45 the composition is skewed to acidic residues; sequence EAAEEDLDYEEEEETS. In terms of domain architecture, IQ spans 372-401; it reads ELRSIVKLQAWWRGSVVRKEIGNFKMPKKD. Positions 394 to 413 are enriched in basic and acidic residues; it reads NFKMPKKDKDDSKDSKGKEK.

The protein belongs to the DRC9 family. In terms of assembly, component of the nexin-dynein regulatory complex (N-DRC). Interacts (via IQ domain) with CALM when calcium levels are low. Does not interact with CALM in the presence of Ca(2+). Interacts with the HSP70 proteins HSPA1L and HSPA8. May form a complex with CAMK4 and HSP70. Expressed in the testes (at protein level). Also detected in oviduct (at protein level). Also detected in the trachea.

It localises to the cytoplasm. It is found in the cell projection. Its subcellular location is the cilium. The protein resides in the flagellum. The protein localises to the cytoskeleton. It localises to the flagellum axoneme. In terms of biological role, component of the nexin-dynein regulatory complex (N-DRC), a key regulator of ciliary/flagellar motility which maintains the alignment and integrity of the distal axoneme and regulates microtubule sliding in motile axonemes. Binds calmodulin when cellular Ca(2+) levels are low and thereby contributes to the regulation of calcium and calmodulin-dependent protein kinase IV (CAMK4) activity; contributes to the regulation of CAMK4 signaling cascades. Required for normal axoneme assembly in sperm flagella, normal sperm tail formation and for male fertility. In Mus musculus (Mouse), this protein is Dynein regulatory complex protein 9 (Iqcg).